The chain runs to 458 residues: ATP synthase subunit beta (458 aa).

148-155 (GGAGVGKT) contributes to the ATP binding site.

The protein belongs to the ATPase alpha/beta chains family. In terms of assembly, F-type ATPases have 2 components, CF(1) - the catalytic core - and CF(0) - the membrane proton channel. CF(1) has five subunits: alpha(3), beta(3), gamma(1), delta(1), epsilon(1). CF(0) has three main subunits: a(1), b(2) and c(9-12). The alpha and beta chains form an alternating ring which encloses part of the gamma chain. CF(1) is attached to CF(0) by a central stalk formed by the gamma and epsilon chains, while a peripheral stalk is formed by the delta and b chains.

It localises to the cell inner membrane. It carries out the reaction ATP + H2O + 4 H(+)(in) = ADP + phosphate + 5 H(+)(out). Its function is as follows. Produces ATP from ADP in the presence of a proton gradient across the membrane. The catalytic sites are hosted primarily by the beta subunits. The polypeptide is ATP synthase subunit beta (Francisella philomiragia subsp. philomiragia (strain ATCC 25017 / CCUG 19701 / FSC 153 / O#319-036)).